The following is a 154-amino-acid chain: Cathelicidin-2 (154 aa).

Positions 1 to 17 (MLSCWVLLLALLGGVCA) are cleaved as a signal peptide. A propeptide spanning residues 18–122 (LPAPLSYPQA…RCRDASSDPV (105 aa)) is cleaved from the precursor. Disulfide bonds link Cys75/Cys86 and Cys97/Cys114.

The protein belongs to the cathelicidin family. In terms of tissue distribution, detected in trachea, lung, proventriculus, duodenum, jejunum, ileum, caeca, colon, caecal tonsil, bursa of Fabricius, kidney, ovary, testis, thymus, liver, spleen, bone marrow, skin, uropygial gland, muscle and brain.

Its subcellular location is the secreted. In terms of biological role, binds bacterial lipopolysaccharide (LPS). Has potent antimicrobial activity against Gram-positive and Gram-negative bacteria (in vitro). Has hemolytic activity (in vitro). May play a role in the innate immune response. This Gallus gallus (Chicken) protein is Cathelicidin-2 (CATHL2).